Reading from the N-terminus, the 325-residue chain is Tartrate-resistant acid phosphatase type 5 (325 aa).

The signal sequence occupies residues 1–21 (MDMWTALLILQALLLPSLADG). Fe cation is bound by residues Asp33, Asp71, Tyr74, and Asn110. 2 N-linked (GlcNAc...) asparagine glycosylation sites follow: Asn116 and Asn147. Cys161 and Cys219 form a disulfide bridge. Fe cation contacts are provided by His205, His240, and His242.

This sequence belongs to the metallophosphoesterase superfamily. Purple acid phosphatase family. In terms of assembly, exists either as monomer or, after proteolytic processing, as a dimer of two chains linked by disulfide bond(s). It depends on Fe cation as a cofactor.

It localises to the lysosome. The catalysed reaction is a phosphate monoester + H2O = an alcohol + phosphate. In terms of biological role, involved in osteopontin/bone sialoprotein dephosphorylation. Its expression seems to increase in certain pathological states such as Gaucher and Hodgkin diseases, the hairy cell, the B-cell, and the T-cell leukemias. The chain is Tartrate-resistant acid phosphatase type 5 (ACP5) from Homo sapiens (Human).